The sequence spans 297 residues: Formamidopyrimidine-DNA glycosylase (297 aa).

P2 serves as the catalytic Schiff-base intermediate with DNA. The active-site Proton donor is the E3. Catalysis depends on K58, which acts as the Proton donor; for beta-elimination activity. The DNA site is built by H104, R127, and K170. An FPG-type zinc finger spans residues 261 to 297; it reads SVYDREGKPCRKEGCSGTIQRFVQGGRSTFYCPICQR. R287 serves as the catalytic Proton donor; for delta-elimination activity.

Belongs to the FPG family. In terms of assembly, monomer. Zn(2+) serves as cofactor.

It catalyses the reaction Hydrolysis of DNA containing ring-opened 7-methylguanine residues, releasing 2,6-diamino-4-hydroxy-5-(N-methyl)formamidopyrimidine.. The catalysed reaction is 2'-deoxyribonucleotide-(2'-deoxyribose 5'-phosphate)-2'-deoxyribonucleotide-DNA = a 3'-end 2'-deoxyribonucleotide-(2,3-dehydro-2,3-deoxyribose 5'-phosphate)-DNA + a 5'-end 5'-phospho-2'-deoxyribonucleoside-DNA + H(+). Functionally, involved in base excision repair of DNA damaged by oxidation or by mutagenic agents. Acts as a DNA glycosylase that recognizes and removes damaged bases. Has a preference for oxidized purines, such as 7,8-dihydro-8-oxoguanine (8-oxoG). Has AP (apurinic/apyrimidinic) lyase activity and introduces nicks in the DNA strand. Cleaves the DNA backbone by beta-delta elimination to generate a single-strand break at the site of the removed base with both 3'- and 5'-phosphates. In Chelativorans sp. (strain BNC1), this protein is Formamidopyrimidine-DNA glycosylase.